Here is a 182-residue protein sequence, read N- to C-terminus: Bifunctional protein PyrR (182 aa).

The PRPP-binding signature appears at 99–111 (IVLVDDVLFTGRT).

Belongs to the purine/pyrimidine phosphoribosyltransferase family. PyrR subfamily. As to quaternary structure, homodimer and homohexamer; in equilibrium.

The enzyme catalyses UMP + diphosphate = 5-phospho-alpha-D-ribose 1-diphosphate + uracil. In terms of biological role, regulates transcriptional attenuation of the pyrimidine nucleotide (pyr) operon by binding in a uridine-dependent manner to specific sites on pyr mRNA. This disrupts an antiterminator hairpin in the RNA and favors formation of a downstream transcription terminator, leading to a reduced expression of downstream genes. Its function is as follows. Also displays a weak uracil phosphoribosyltransferase activity which is not physiologically significant. This chain is Bifunctional protein PyrR, found in Caldicellulosiruptor bescii (strain ATCC BAA-1888 / DSM 6725 / KCTC 15123 / Z-1320) (Anaerocellum thermophilum).